A 509-amino-acid chain; its full sequence is 2-succinyl-5-enolpyruvyl-6-hydroxy-3-cyclohexene-1-carboxylate synthase (509 aa).

The protein belongs to the TPP enzyme family. MenD subfamily. In terms of assembly, homodimer. Requires Mg(2+) as cofactor. The cofactor is Mn(2+). Thiamine diphosphate is required as a cofactor.

It catalyses the reaction isochorismate + 2-oxoglutarate + H(+) = 5-enolpyruvoyl-6-hydroxy-2-succinyl-cyclohex-3-ene-1-carboxylate + CO2. Its pathway is quinol/quinone metabolism; 1,4-dihydroxy-2-naphthoate biosynthesis; 1,4-dihydroxy-2-naphthoate from chorismate: step 2/7. It participates in quinol/quinone metabolism; menaquinone biosynthesis. Its function is as follows. Catalyzes the thiamine diphosphate-dependent decarboxylation of 2-oxoglutarate and the subsequent addition of the resulting succinic semialdehyde-thiamine pyrophosphate anion to isochorismate to yield 2-succinyl-5-enolpyruvyl-6-hydroxy-3-cyclohexene-1-carboxylate (SEPHCHC). The polypeptide is 2-succinyl-5-enolpyruvyl-6-hydroxy-3-cyclohexene-1-carboxylate synthase (Corynebacterium diphtheriae (strain ATCC 700971 / NCTC 13129 / Biotype gravis)).